The primary structure comprises 217 residues: Large ribosomal subunit protein uL1 (217 aa).

K122 carries the N6,N6-dimethyllysine; alternate modification. K122 bears the N6-methyllysine; alternate mark.

This sequence belongs to the universal ribosomal protein uL1 family.

The sequence is that of Large ribosomal subunit protein uL1 (rpl10a) from Dictyostelium discoideum (Social amoeba).